We begin with the raw amino-acid sequence, 74 residues long: UPF0291 protein EF_0064 (74 aa).

Residues 53–74 (YDPTGEDVTPEKLKEEQQKYFD) are disordered. Residues 61–74 (TPEKLKEEQQKYFD) show a composition bias toward basic and acidic residues.

The protein belongs to the UPF0291 family.

Its subcellular location is the cytoplasm. This Enterococcus faecalis (strain ATCC 700802 / V583) protein is UPF0291 protein EF_0064.